We begin with the raw amino-acid sequence, 671 residues long: tRNA 5-methylaminomethyl-2-thiouridine biosynthesis bifunctional protein MnmC (671 aa).

The interval 1 to 245 (MVNVMNTLSF…KREMLWGEKP (245 aa)) is tRNA (mnm(5)s(2)U34)-methyltransferase. The interval 272–671 (VGGGVASLFV…RKLLKGSKVE (400 aa)) is FAD-dependent cmnm(5)s(2)U34 oxidoreductase.

This sequence in the N-terminal section; belongs to the methyltransferase superfamily. tRNA (mnm(5)s(2)U34)-methyltransferase family. The protein in the C-terminal section; belongs to the DAO family. It depends on FAD as a cofactor.

It is found in the cytoplasm. The catalysed reaction is 5-aminomethyl-2-thiouridine(34) in tRNA + S-adenosyl-L-methionine = 5-methylaminomethyl-2-thiouridine(34) in tRNA + S-adenosyl-L-homocysteine + H(+). In terms of biological role, catalyzes the last two steps in the biosynthesis of 5-methylaminomethyl-2-thiouridine (mnm(5)s(2)U) at the wobble position (U34) in tRNA. Catalyzes the FAD-dependent demodification of cmnm(5)s(2)U34 to nm(5)s(2)U34, followed by the transfer of a methyl group from S-adenosyl-L-methionine to nm(5)s(2)U34, to form mnm(5)s(2)U34. The protein is tRNA 5-methylaminomethyl-2-thiouridine biosynthesis bifunctional protein MnmC of Actinobacillus pleuropneumoniae serotype 5b (strain L20).